A 141-amino-acid chain; its full sequence is Vasotocin-neurophysin VT (141 aa).

Residues Cys-1 and Cys-6 are joined by a disulfide bond. Gly-9 carries the post-translational modification Glycine amide. Cystine bridges form between Cys-22-Cys-66, Cys-25-Cys-39, Cys-33-Cys-56, Cys-40-Cys-46, Cys-73-Cys-85, Cys-79-Cys-97, and Cys-86-Cys-91. The N-linked (GlcNAc...) asparagine glycan is linked to Asn-117.

Belongs to the vasopressin/oxytocin family. Seven disulfide bonds are present in neurophysin.

The protein resides in the secreted. Its function is as follows. Vasotocin is an antidiuretic hormone. This is Vasotocin-neurophysin VT from Pelophylax lessonae (Pool frog).